Here is a 95-residue protein sequence, read N- to C-terminus: Protein TusB (95 aa).

This sequence belongs to the DsrH/TusB family. Heterohexamer, formed by a dimer of trimers. The hexameric TusBCD complex contains 2 copies each of TusB, TusC and TusD. The TusBCD complex interacts with TusE.

It is found in the cytoplasm. Part of a sulfur-relay system required for 2-thiolation of 5-methylaminomethyl-2-thiouridine (mnm(5)s(2)U) at tRNA wobble positions. This Klebsiella pneumoniae subsp. pneumoniae (strain ATCC 700721 / MGH 78578) protein is Protein TusB.